A 1037-amino-acid chain; its full sequence is Nucleoporin NUP120 (1037 aa).

Leucine-zipper stretches follow at residues 131-152 (LQLP…WFHL) and 290-311 (LLPL…SGIL). Thr-417 is modified (phosphothreonine).

As to quaternary structure, component of the nuclear pore complex (NPC). NPC constitutes the exclusive means of nucleocytoplasmic transport. NPCs allow the passive diffusion of ions and small molecules and the active, nuclear transport receptor-mediated bidirectional transport of macromolecules such as proteins, RNAs, ribonucleoparticles (RNPs), and ribosomal subunits across the nuclear envelope. Due to its 8-fold rotational symmetry, all subunits are present with 8 copies or multiples thereof. NUP120 is part of the heptameric 0.5 MDa autoassembling NUP84 NPC subcomplex (NUP84, NUP85, NUP120, NUP133, NUP145C, SEC13 and SEH1).

Its subcellular location is the nucleus. It localises to the nuclear pore complex. It is found in the nucleus membrane. Its function is as follows. Functions as a component of the nuclear pore complex (NPC). NPC components, collectively referred to as nucleoporins (NUPs), can play the role of both NPC structural components and of docking or interaction partners for transiently associated nuclear transport factors. NUP120 is involved in nuclear poly(A)+ RNA and pre-ribosome export, in GSP1 nuclear import, in NPC assembly and distribution, as well as in nuclear envelope organization. This chain is Nucleoporin NUP120 (NUP120), found in Saccharomyces cerevisiae (strain ATCC 204508 / S288c) (Baker's yeast).